Here is a 265-residue protein sequence, read N- to C-terminus: UPF0354 protein BH3252 (265 aa).

Belongs to the UPF0354 family.

This Halalkalibacterium halodurans (strain ATCC BAA-125 / DSM 18197 / FERM 7344 / JCM 9153 / C-125) (Bacillus halodurans) protein is UPF0354 protein BH3252.